The following is a 482-amino-acid chain: Auxin transporter-like protein 2 (482 aa).

Residues 1–58 are Cytoplasmic-facing; the sequence is MVPAGDQAEEAIVADAGKEEAEVRAAMGVEQDGKFSMTSLLWHGGSVWDAWFSCASNQ. A helical transmembrane segment spans residues 59 to 76; it reads VAQVLLTLPYSFSQLGML. The Extracellular portion of the chain corresponds to 77-78; the sequence is SG. The chain crosses the membrane as a helical span at residues 79–99; sequence LLLQVFYGLMGSWTAYLISVL. Residues 100–134 lie on the Cytoplasmic side of the membrane; it reads YVEYRARKEKEGVSFKNHVIQWFEVLDGLLGPYWK. Residues 135-155 form a helical membrane-spanning segment; sequence AAGLAFNCTFLLFGSVIQLIA. The Extracellular portion of the chain corresponds to 156–171; the sequence is CASNIYYINDRLDKRT. A helical membrane pass occupies residues 172-192; the sequence is WTYIFGACCSTTVFIPSFHNY. Position 193 (Arg-193) is a topological domain, cytoplasmic. Residues 194-214 traverse the membrane as a helical segment; that stretch reads IWSFLGLGMTTYTAWYLAIAA. The Extracellular segment spans residues 215–231; it reads AVHGQVDGVTHSGPSKM. A helical membrane pass occupies residues 232–252; that stretch reads VLYFTGATNILYTFGGHAVTV. At 253–265 the chain is on the cytoplasmic side; the sequence is EIMHAMWKPQKFK. The helical transmembrane segment at 266 to 286 threads the bilayer; the sequence is YIYLVATLYVFTLTLPSASAM. Topologically, residues 287–313 are extracellular; it reads YWAFGDALLTHSNAFSLLPRSGWRDAA. The helical transmembrane segment at 314-334 threads the bilayer; it reads VILMLIHQFITFGFACTPLYF. The Cytoplasmic segment spans residues 335–355; the sequence is VWEKAIGMHGTRSVLTRALAR. A helical transmembrane segment spans residues 356–376; it reads LPIVVPIWFLAIIFPFFGPIN. A topological domain (extracellular) is located at residue Ser-377. Residues 378-398 form a helical membrane-spanning segment; it reads AVGALLVSFTVYIIPSLSHIL. The Cytoplasmic segment spans residues 399–423; sequence TYRSASARLNAAEKPPPFLPSWSGM. The chain crosses the membrane as a helical span at residues 424–444; the sequence is FVVNVFVVAWVLVVGFGLGGW. The Extracellular portion of the chain corresponds to 445 to 482; sequence ASVTNFIKQIDTFGLFAKCYQCPPRAHAGAPLPAPPRH.

It belongs to the amino acid/polyamine transporter 2 family. Amino acid/auxin permease (AAAP) (TC 2.A.18.1) subfamily.

It is found in the cell membrane. Functionally, carrier protein involved in proton-driven auxin influx. May mediate the formation of auxin gradient from developing leaves (site of auxin biosynthesis) to tips. This Oryza sativa subsp. japonica (Rice) protein is Auxin transporter-like protein 2.